Here is a 352-residue protein sequence, read N- to C-terminus: Histidinol-phosphate aminotransferase (352 aa).

Position 221 is an N6-(pyridoxal phosphate)lysine (K221).

This sequence belongs to the class-II pyridoxal-phosphate-dependent aminotransferase family. Histidinol-phosphate aminotransferase subfamily. Homodimer. Pyridoxal 5'-phosphate serves as cofactor.

The enzyme catalyses L-histidinol phosphate + 2-oxoglutarate = 3-(imidazol-4-yl)-2-oxopropyl phosphate + L-glutamate. The protein operates within amino-acid biosynthesis; L-histidine biosynthesis; L-histidine from 5-phospho-alpha-D-ribose 1-diphosphate: step 7/9. The sequence is that of Histidinol-phosphate aminotransferase from Staphylococcus aureus (strain bovine RF122 / ET3-1).